Reading from the N-terminus, the 525-residue chain is Beta-galactoside alpha-2,6-sialyltransferase 2 (525 aa).

At 1–11 (MKPHLKQWRQR) the chain is on the cytoplasmic side. Residues 12–32 (MLFAIFVWGLLFLAIFIYFTN) form a helical; Signal-anchor for type II membrane protein membrane-spanning segment. The Lumenal portion of the chain corresponds to 33-525 (SNPAAPMPSS…PVTRPNNTNT (493 aa)). 2 disordered regions span residues 85–107 (SASP…DGFD) and 145–183 (RQGA…PEEA). 3 cysteine pairs are disulfide-bonded: Cys249–Cys515, Cys292–Cys444, and Cys462–Cys473. 2 N-linked (GlcNAc...) asparagine glycosylation sites follow: Asn303 and Asn333. Asn521 carries an N-linked (GlcNAc...) asparagine glycan.

The protein belongs to the glycosyltransferase 29 family.

It localises to the golgi apparatus. The protein resides in the golgi stack membrane. It catalyses the reaction a beta-D-galactoside + CMP-N-acetyl-beta-neuraminate = an N-acetyl-alpha-neuraminyl-(2-&gt;6)-beta-D-galactosyl derivative + CMP + H(+). Functionally, transfers sialic acid from the donor of substrate CMP-sialic acid to galactose containing acceptor substrates. Has alpha-2,6-sialyltransferase activity toward oligosaccharides that have the Gal-beta-1,4-GlcNAc sequence at the non-reducing end of their carbohydrate groups, but it has weak or no activities toward glycoproteins and glycolipids. The polypeptide is Beta-galactoside alpha-2,6-sialyltransferase 2 (St6gal2) (Rattus norvegicus (Rat)).